Reading from the N-terminus, the 103-residue chain is c-Myc-binding protein (103 aa).

The protein belongs to the AMY1 family. Binds via its C-terminal region to the N-terminal region of MYC. Associates with AKAP1/S-AKAP84. Interacts with MYCBPAP. Interacts with CFAP91.

It is found in the cytoplasm. The protein localises to the nucleus. Its function is as follows. May control the transcriptional activity of MYC. Stimulates the activation of E box-dependent transcription by MYC. This chain is c-Myc-binding protein (Mycbp), found in Mus musculus (Mouse).